Consider the following 316-residue polypeptide: 4-hydroxy-3-methylbut-2-enyl diphosphate reductase (316 aa).

Cysteine 12 contributes to the [4Fe-4S] cluster binding site. 2 residues coordinate (2E)-4-hydroxy-3-methylbut-2-enyl diphosphate: histidine 41 and histidine 74. Dimethylallyl diphosphate is bound by residues histidine 41 and histidine 74. Histidine 41 and histidine 74 together coordinate isopentenyl diphosphate. Position 96 (cysteine 96) interacts with [4Fe-4S] cluster. A (2E)-4-hydroxy-3-methylbut-2-enyl diphosphate-binding site is contributed by histidine 124. Histidine 124 provides a ligand contact to dimethylallyl diphosphate. Histidine 124 is a binding site for isopentenyl diphosphate. Glutamate 126 functions as the Proton donor in the catalytic mechanism. Threonine 167 lines the (2E)-4-hydroxy-3-methylbut-2-enyl diphosphate pocket. Cysteine 197 contacts [4Fe-4S] cluster. The (2E)-4-hydroxy-3-methylbut-2-enyl diphosphate site is built by serine 225, serine 226, asparagine 227, and serine 269. The dimethylallyl diphosphate site is built by serine 225, serine 226, asparagine 227, and serine 269. Residues serine 225, serine 226, asparagine 227, and serine 269 each contribute to the isopentenyl diphosphate site.

The protein belongs to the IspH family. As to quaternary structure, homodimer. It depends on [4Fe-4S] cluster as a cofactor.

It catalyses the reaction isopentenyl diphosphate + 2 oxidized [2Fe-2S]-[ferredoxin] + H2O = (2E)-4-hydroxy-3-methylbut-2-enyl diphosphate + 2 reduced [2Fe-2S]-[ferredoxin] + 2 H(+). The enzyme catalyses dimethylallyl diphosphate + 2 oxidized [2Fe-2S]-[ferredoxin] + H2O = (2E)-4-hydroxy-3-methylbut-2-enyl diphosphate + 2 reduced [2Fe-2S]-[ferredoxin] + 2 H(+). The protein operates within isoprenoid biosynthesis; dimethylallyl diphosphate biosynthesis; dimethylallyl diphosphate from (2E)-4-hydroxy-3-methylbutenyl diphosphate: step 1/1. It functions in the pathway isoprenoid biosynthesis; isopentenyl diphosphate biosynthesis via DXP pathway; isopentenyl diphosphate from 1-deoxy-D-xylulose 5-phosphate: step 6/6. Its function is as follows. Catalyzes the conversion of 1-hydroxy-2-methyl-2-(E)-butenyl 4-diphosphate (HMBPP) into a mixture of isopentenyl diphosphate (IPP) and dimethylallyl diphosphate (DMAPP). Acts in the terminal step of the DOXP/MEP pathway for isoprenoid precursor biosynthesis. The polypeptide is 4-hydroxy-3-methylbut-2-enyl diphosphate reductase (Salmonella schwarzengrund (strain CVM19633)).